The sequence spans 568 residues: Small ribosomal subunit protein bS1 (568 aa).

6 consecutive S1 motif domains span residues 39–100 (KTVV…LSRE), 118–184 (GEFV…VSRR), 205–273 (GMVL…LGIK), 290–360 (GKQM…LSIK), 377–447 (GTII…LGIK), and 464–533 (GTIV…LSVK).

The protein belongs to the bacterial ribosomal protein bS1 family.

Binds mRNA; thus facilitating recognition of the initiation point. It is needed to translate mRNA with a short Shine-Dalgarno (SD) purine-rich sequence. The chain is Small ribosomal subunit protein bS1 (rpsA) from Rickettsia conorii (strain ATCC VR-613 / Malish 7).